Consider the following 486-residue polypeptide: N-succinylglutamate 5-semialdehyde dehydrogenase (486 aa).

NAD(+) is bound at residue 220-225; that stretch reads GSSRTG. Active-site residues include Glu-243 and Cys-277.

Belongs to the aldehyde dehydrogenase family. AstD subfamily.

It carries out the reaction N-succinyl-L-glutamate 5-semialdehyde + NAD(+) + H2O = N-succinyl-L-glutamate + NADH + 2 H(+). The protein operates within amino-acid degradation; L-arginine degradation via AST pathway; L-glutamate and succinate from L-arginine: step 4/5. Functionally, catalyzes the NAD-dependent reduction of succinylglutamate semialdehyde into succinylglutamate. This chain is N-succinylglutamate 5-semialdehyde dehydrogenase, found in Shewanella baltica (strain OS223).